A 132-amino-acid polypeptide reads, in one-letter code: Small ribosomal subunit protein uS8 (132 aa).

The protein belongs to the universal ribosomal protein uS8 family. Part of the 30S ribosomal subunit. Contacts proteins S5 and S12.

One of the primary rRNA binding proteins, it binds directly to 16S rRNA central domain where it helps coordinate assembly of the platform of the 30S subunit. In Saccharopolyspora erythraea (strain ATCC 11635 / DSM 40517 / JCM 4748 / NBRC 13426 / NCIMB 8594 / NRRL 2338), this protein is Small ribosomal subunit protein uS8.